The sequence spans 186 residues: ADP-ribosylation factor-like protein 8B-A (186 aa).

The note=Mediates targeting to membranes intramembrane region spans 1–19; sequence MLALINRLLDWFKSLFWKE. GTP is bound by residues 29–35, 71–75, and 130–133; these read QYSGKTT, DIGGQ, and NKRD.

Belongs to the small GTPase superfamily. Arf family.

The protein localises to the late endosome membrane. It is found in the lysosome membrane. The protein resides in the cytoplasm. Its subcellular location is the cytoskeleton. It localises to the spindle. The protein localises to the early endosome membrane. Its function is as follows. Small GTPase which cycles between active GTP-bound and inactive GDP-bound states. In its active state, binds to a variety of effector proteins playing a key role in the regulation of lysosomal positioning which is important for nutrient sensing, natural killer cell-mediated cytotoxicity and antigen presentation. Along with its effectors, orchestrates lysosomal transport and fusion. In Danio rerio (Zebrafish), this protein is ADP-ribosylation factor-like protein 8B-A (arl8ba).